Consider the following 227-residue polypeptide: ATP-dependent dethiobiotin synthetase BioD (227 aa).

An ATP-binding site is contributed by 13 to 18 (DVGKTV). T17 contacts Mg(2+). Residue K38 is part of the active site. Residues D55, 116–119 (EGAG), 176–177 (NR), and 205–207 (PYI) each bind ATP. Residues D55 and E116 each contribute to the Mg(2+) site.

It belongs to the dethiobiotin synthetase family. As to quaternary structure, homodimer. The cofactor is Mg(2+).

It localises to the cytoplasm. The catalysed reaction is (7R,8S)-7,8-diammoniononanoate + CO2 + ATP = (4R,5S)-dethiobiotin + ADP + phosphate + 3 H(+). The protein operates within cofactor biosynthesis; biotin biosynthesis; biotin from 7,8-diaminononanoate: step 1/2. In terms of biological role, catalyzes a mechanistically unusual reaction, the ATP-dependent insertion of CO2 between the N7 and N8 nitrogen atoms of 7,8-diaminopelargonic acid (DAPA, also called 7,8-diammoniononanoate) to form a ureido ring. This chain is ATP-dependent dethiobiotin synthetase BioD, found in Vibrio campbellii (strain ATCC BAA-1116).